Reading from the N-terminus, the 350-residue chain is Bifunctional nitrilase/nitrile hydratase NIT4B (350 aa).

Residues 30–302 (VRATVVQAST…EALISADLDL (273 aa)) form the CN hydrolase domain. Residue Glu70 is the Proton acceptor of the active site. Residue Lys157 is part of the active site. Cys191 (nucleophile) is an active-site residue.

Belongs to the carbon-nitrogen hydrolase superfamily. Nitrilase family. Highly expressed in leaves and cotyledons, lower expression in stems and roots.

It catalyses the reaction L-asparagine = 3-cyano-L-alanine + H2O. The catalysed reaction is 3-cyano-L-alanine + 2 H2O = L-aspartate + NH4(+). In terms of biological role, involved in the cyanide detoxification pathway. Has nitrilase and nitrile-hydratase activity in the ratio 3.3:1, producing both asparagine and aspartic acid from beta-cyano-L-alanine (Ala(CN)). Can also use 3-phenylpropionitrile as substrate, but not indole-3-acetonitrile. In Lupinus angustifolius (Narrow-leaved blue lupine), this protein is Bifunctional nitrilase/nitrile hydratase NIT4B (NIT4B).